Here is a 263-residue protein sequence, read N- to C-terminus: Acyl-[acyl-carrier-protein]--UDP-N-acetylglucosamine O-acyltransferase (263 aa).

This sequence belongs to the transferase hexapeptide repeat family. LpxA subfamily. In terms of assembly, homotrimer.

The protein localises to the cytoplasm. It carries out the reaction a (3R)-hydroxyacyl-[ACP] + UDP-N-acetyl-alpha-D-glucosamine = a UDP-3-O-[(3R)-3-hydroxyacyl]-N-acetyl-alpha-D-glucosamine + holo-[ACP]. Its pathway is glycolipid biosynthesis; lipid IV(A) biosynthesis; lipid IV(A) from (3R)-3-hydroxytetradecanoyl-[acyl-carrier-protein] and UDP-N-acetyl-alpha-D-glucosamine: step 1/6. Functionally, involved in the biosynthesis of lipid A, a phosphorylated glycolipid that anchors the lipopolysaccharide to the outer membrane of the cell. The protein is Acyl-[acyl-carrier-protein]--UDP-N-acetylglucosamine O-acyltransferase of Xanthomonas euvesicatoria pv. vesicatoria (strain 85-10) (Xanthomonas campestris pv. vesicatoria).